Here is a 279-residue protein sequence, read N- to C-terminus: MTTRIDTKFAELKAEGRPALVTYFMGGDPDLETALKVMKALPKAGADVIELGMPFSDPMADGPAIQAAGLRALNAGQTLAKTLYMAAEFRKEDDTTPIVMMGYYNLIYIYGVERFLTDAKASGVDGLIVVDLPSEMDAELCIPAMKAGINFIRLTTPTTDDKRLPKVLHNSSGFVYYVSMNGITGAAIADTAKVGEAVRHIKKSTDLPICVGFGVKTPEQAAAIATHADGVVVGTAIVNAIAGELDEKGKAKGDPVAAATRLVHALAESVRATRLEAAQ.

Active-site proton acceptor residues include Glu-50 and Asp-61.

This sequence belongs to the TrpA family. Tetramer of two alpha and two beta chains.

It catalyses the reaction (1S,2R)-1-C-(indol-3-yl)glycerol 3-phosphate + L-serine = D-glyceraldehyde 3-phosphate + L-tryptophan + H2O. Its pathway is amino-acid biosynthesis; L-tryptophan biosynthesis; L-tryptophan from chorismate: step 5/5. The alpha subunit is responsible for the aldol cleavage of indoleglycerol phosphate to indole and glyceraldehyde 3-phosphate. This Brucella melitensis biotype 1 (strain ATCC 23456 / CCUG 17765 / NCTC 10094 / 16M) protein is Tryptophan synthase alpha chain.